The primary structure comprises 217 residues: Probable transaldolase (217 aa).

Lys83 (schiff-base intermediate with substrate) is an active-site residue.

The protein belongs to the transaldolase family. Type 3B subfamily.

It localises to the cytoplasm. It carries out the reaction D-sedoheptulose 7-phosphate + D-glyceraldehyde 3-phosphate = D-erythrose 4-phosphate + beta-D-fructose 6-phosphate. It participates in carbohydrate degradation; pentose phosphate pathway; D-glyceraldehyde 3-phosphate and beta-D-fructose 6-phosphate from D-ribose 5-phosphate and D-xylulose 5-phosphate (non-oxidative stage): step 2/3. Transaldolase is important for the balance of metabolites in the pentose-phosphate pathway. The protein is Probable transaldolase of Coprothermobacter proteolyticus (strain ATCC 35245 / DSM 5265 / OCM 4 / BT).